The following is a 157-amino-acid chain: Crossover junction endodeoxyribonuclease RuvC (157 aa).

Active-site residues include Asp-7, Glu-66, and Asp-139. Asp-7, Glu-66, and Asp-139 together coordinate Mg(2+).

The protein belongs to the RuvC family. In terms of assembly, homodimer which binds Holliday junction (HJ) DNA. The HJ becomes 2-fold symmetrical on binding to RuvC with unstacked arms; it has a different conformation from HJ DNA in complex with RuvA. In the full resolvosome a probable DNA-RuvA(4)-RuvB(12)-RuvC(2) complex forms which resolves the HJ. The cofactor is Mg(2+).

The protein resides in the cytoplasm. The catalysed reaction is Endonucleolytic cleavage at a junction such as a reciprocal single-stranded crossover between two homologous DNA duplexes (Holliday junction).. Its function is as follows. The RuvA-RuvB-RuvC complex processes Holliday junction (HJ) DNA during genetic recombination and DNA repair. Endonuclease that resolves HJ intermediates. Cleaves cruciform DNA by making single-stranded nicks across the HJ at symmetrical positions within the homologous arms, yielding a 5'-phosphate and a 3'-hydroxyl group; requires a central core of homology in the junction. The consensus cleavage sequence is 5'-(A/T)TT(C/G)-3'. Cleavage occurs on the 3'-side of the TT dinucleotide at the point of strand exchange. HJ branch migration catalyzed by RuvA-RuvB allows RuvC to scan DNA until it finds its consensus sequence, where it cleaves and resolves the cruciform DNA. The chain is Crossover junction endodeoxyribonuclease RuvC from Helicobacter pylori (strain ATCC 700392 / 26695) (Campylobacter pylori).